The primary structure comprises 762 residues: Protein PHTF1 (762 aa).

The PHTF domain maps to 6 to 150 (RDAISWYQKK…VHCQIVSTQI (145 aa)). A run of 3 helical transmembrane segments spans residues 77–97 (GLVR…VTSL), 99–119 (IFVW…LYLM), and 121–141 (PIVS…MGTV). A disordered region spans residues 152 to 184 (RPSGNNGNRRRRKLRKTVNGDGTRDNGNNSPDK). N-linked (GlcNAc...) asparagine glycosylation is found at Asn179 and Asn224. Ser272, Ser276, Ser277, Ser334, and Ser336 each carry phosphoserine. The tract at residues 345–415 (AAFSQGSRSG…NTLHSGTKRD (71 aa)) is disordered. A compositionally biased stretch (low complexity) spans 348–364 (SQGSRSGMSGGSRSLNL). An N-linked (GlcNAc...) asparagine glycan is attached at Asn363. Residues 365–376 (SRRDSESTRHDS) show a composition bias toward basic and acidic residues. An N-linked (GlcNAc...) asparagine glycan is attached at Asn431. The next 4 helical transmembrane spans lie at 473-493 (GVGY…FPFL), 515-535 (TLFC…INFF), 611-631 (VVVS…CAQV), and 645-665 (WEFL…ASLG). Asn674 and Asn733 each carry an N-linked (GlcNAc...) asparagine glycan. A helical transmembrane segment spans residues 737–757 (VVILSAVSGVISDLLGFNIRL).

As to quaternary structure, interacts with FEM1B. Highly expressed in testis.

The protein resides in the endoplasmic reticulum membrane. It is found in the golgi apparatus. It localises to the cis-Golgi network membrane. This is Protein PHTF1 from Rattus norvegicus (Rat).